Reading from the N-terminus, the 221-residue chain is Chaperone protein TorD (221 aa).

Belongs to the TorD/DmsD family. TorD subfamily.

It localises to the cytoplasm. In terms of biological role, involved in the biogenesis of TorA. Acts on TorA before the insertion of the molybdenum cofactor and, as a result, probably favors a conformation of the apoenzyme that is competent for acquiring the cofactor. The sequence is that of Chaperone protein TorD from Shewanella pealeana (strain ATCC 700345 / ANG-SQ1).